A 379-amino-acid polypeptide reads, in one-letter code: All-trans-retinol dehydrogenase [NAD(+)] ADH4 (379 aa).

Threonine 1 is subject to N-acetylthreonine. Residues cysteine 46, histidine 68, cysteine 98, cysteine 101, cysteine 104, cysteine 112, and cysteine 179 each coordinate Zn(2+). NAD(+) contacts are provided by residues 204–209 (GLGGVG), aspartate 228, lysine 233, 297–299 (VGV), and arginine 374.

This sequence belongs to the zinc-containing alcohol dehydrogenase family. Class-II subfamily. Homodimer. Requires Zn(2+) as cofactor.

Its subcellular location is the cytoplasm. It catalyses the reaction all-trans-retinol + NAD(+) = all-trans-retinal + NADH + H(+). The catalysed reaction is 9-cis-retinol + NAD(+) = 9-cis-retinal + NADH + H(+). It carries out the reaction 20-oxo-(5Z,8Z,11Z,14Z)-eicosatetraenoate + NAD(+) + H2O = (5Z,8Z,11Z,14Z)-eicosatetraenedioate + NADH + 2 H(+). The enzyme catalyses 20-hydroxy-(5Z,8Z,11Z,14Z)-eicosatetraenoate + NAD(+) = 20-oxo-(5Z,8Z,11Z,14Z)-eicosatetraenoate + NADH + H(+). It catalyses the reaction 1,4-benzoquinone + NADH + H(+) = hydroquinone + NAD(+). With respect to regulation, oxidation of 20-HETE is inhibited by low concentrations of N-heptylformamide. Oxidation of 20-HETE is a decreased by 55-65% by either all-trans-retinol or all-trans-retinoic acid. Strongly inhibited by omega-hydroxy fatty acids. Catalyzes the NAD-dependent oxidation of either all-trans-retinol or 9-cis-retinol. Also oxidizes long chain omega-hydroxy fatty acids, such as 20-HETE, producing both the intermediate aldehyde, 20-oxoarachidonate and the end product, a dicarboxylic acid, (5Z,8Z,11Z,14Z)-eicosatetraenedioate. Also catalyzes the reduction of benzoquinones. This Struthio camelus (Common ostrich) protein is All-trans-retinol dehydrogenase [NAD(+)] ADH4.